Reading from the N-terminus, the 499-residue chain is Endoglucanase (499 aa).

Positions 1 to 29 (MKRSISIFITCLLITLLTMGGMIASPASA) are cleaved as a signal peptide. Substrate-binding positions include His65, 69–70 (WY), Tyr96, and His131. Catalysis depends on Glu169, which acts as the Proton donor. Tyr231 serves as a coordination point for substrate. The active-site Nucleophile is Glu257. Substrate contacts are provided by residues 263–264 (AS), Trp291, and 296–298 (KQE). The region spanning 350-499 (QENGISVQYR…GKLIWGTEPN (150 aa)) is the CBM3 domain.

The protein belongs to the glycosyl hydrolase 5 (cellulase A) family.

It catalyses the reaction Endohydrolysis of (1-&gt;4)-beta-D-glucosidic linkages in cellulose, lichenin and cereal beta-D-glucans.. The sequence is that of Endoglucanase (eglS) from Bacillus subtilis (strain 168).